The primary structure comprises 423 residues: Subtilisin-like protease 2 (423 aa).

A signal peptide spans 1 to 17 (MQLLNLGLLLLLPFVAG). A propeptide spanning residues 18–123 (EIAPQPEPLR…VHPDQHVYLA (106 aa)) is cleaved from the precursor. The 87-residue stretch at 37 to 123 (QYIVTLKEGL…VHPDQHVYLA (87 aa)) folds into the Inhibitor I9 domain. Residues 132–423 (RWGLGYMSSK…RKFTLPKNTK (292 aa)) form the Peptidase S8 domain. Active-site charge relay system residues include aspartate 170 and histidine 202. Asparagine 249, asparagine 262, and asparagine 349 each carry an N-linked (GlcNAc...) asparagine glycan. Residue serine 358 is the Charge relay system of the active site. A glycan (N-linked (GlcNAc...) asparagine) is linked at asparagine 389.

Belongs to the peptidase S8 family.

The protein localises to the secreted. Its function is as follows. Secreted subtilisin-like serine protease with keratinolytic activity that contributes to pathogenicity. This Arthroderma otae (strain ATCC MYA-4605 / CBS 113480) (Microsporum canis) protein is Subtilisin-like protease 2 (SUB2).